Consider the following 195-residue polypeptide: ATP-dependent Clp protease proteolytic subunit (195 aa).

The active-site Nucleophile is S98. H123 is a catalytic residue.

Belongs to the peptidase S14 family. As to quaternary structure, fourteen ClpP subunits assemble into 2 heptameric rings which stack back to back to give a disk-like structure with a central cavity, resembling the structure of eukaryotic proteasomes.

The protein localises to the cytoplasm. The catalysed reaction is Hydrolysis of proteins to small peptides in the presence of ATP and magnesium. alpha-casein is the usual test substrate. In the absence of ATP, only oligopeptides shorter than five residues are hydrolyzed (such as succinyl-Leu-Tyr-|-NHMec, and Leu-Tyr-Leu-|-Tyr-Trp, in which cleavage of the -Tyr-|-Leu- and -Tyr-|-Trp bonds also occurs).. In terms of biological role, cleaves peptides in various proteins in a process that requires ATP hydrolysis. Has a chymotrypsin-like activity. Plays a major role in the degradation of misfolded proteins. The protein is ATP-dependent Clp protease proteolytic subunit of Staphylococcus aureus (strain Mu3 / ATCC 700698).